A 127-amino-acid polypeptide reads, in one-letter code: Evasin-4 (127 aa).

Residues 1-23 form the signal peptide; the sequence is MAFKYWFVFAAVLYARQWLSTKC. Disulfide bonds link Cys-50–Cys-69, Cys-65–Cys-112, Cys-86–Cys-117, and Cys-107–Cys-126. Residues Asn-54, Asn-64, Asn-70, Asn-77, Asn-83, Asn-106, and Asn-114 are each glycosylated (N-linked (GlcNAc...) asparagine).

Belongs to the evasin C8 family. As to quaternary structure, monomer.

The protein localises to the secreted. In terms of biological role, salivary chemokine-binding protein which has chemokine-neutralizing activity and binds to host chemokines CCL1, CCL3, CCL5, CCL7, CCL8, CCL11, CCL14, CCL15, CCL16, CCL17, CCL18, CCL19, CCL21, CCL22, CCL23, CCL24, CCL25 and CCL26 with nanomolar affinity. Binds to CCL3 and CCL5 with 1:1 stoichiometry. Although binding to CCL25 is observed, does not inhibit CCL25-induced chemotaxis. Has been shown to reduce cardiac injury and inflammation in mice through its anti-CCL5 activity. This chain is Evasin-4, found in Rhipicephalus sanguineus (Brown dog tick).